We begin with the raw amino-acid sequence, 272 residues long: D-aminoacyl-tRNA deacylase (272 aa).

It belongs to the DtdA deacylase family. In terms of assembly, monomer. Zn(2+) serves as cofactor.

It catalyses the reaction a D-aminoacyl-tRNA + H2O = a tRNA + a D-alpha-amino acid + H(+). The enzyme catalyses glycyl-tRNA(Ala) + H2O = tRNA(Ala) + glycine + H(+). D-aminoacyl-tRNA deacylase with broad substrate specificity. By recycling D-aminoacyl-tRNA to D-amino acids and free tRNA molecules, this enzyme counteracts the toxicity associated with the formation of D-aminoacyl-tRNA entities in vivo. This chain is D-aminoacyl-tRNA deacylase, found in Thermococcus kodakarensis (strain ATCC BAA-918 / JCM 12380 / KOD1) (Pyrococcus kodakaraensis (strain KOD1)).